An 891-amino-acid polypeptide reads, in one-letter code: Tubulin polyglutamylase TTLL6 (891 aa).

Disordered regions lie at residues 1–25 (MGAL…SSPA) and 44–106 (SQAR…KRKK). Positions 63 to 76 (SEEKGDSSKEDPKE) are enriched in basic and acidic residues. Residues 88–99 (GAQNGLQNAQQQ) are compositionally biased toward low complexity. The 344-residue stretch at 106-449 (KKRLVINLSS…ESCDKKKVLE (344 aa)) folds into the TTL domain. Residues K223, 229–230 (QG), 251–254 (QLYI), and 264–266 (KFD) each bind ATP. An a protein-binding site is contributed by Q229. Residue R290 coordinates L-glutamate. 312–313 (TN) is an ATP binding site. The L-glutamate site is built by Y314, S315, and K332. Mg(2+) is bound by residues D395, E408, and N410. A protein is bound at residue H411. The interval 420-499 (RLDKEVKDGL…CGGFRLIYPS (80 aa)) is c-MTBD region. Position 426 (K426) interacts with L-glutamate. Disordered regions lie at residues 546–584 (QMKK…ATQA), 607–636 (GERK…LTSA), 687–711 (TTPE…TASS), and 800–820 (NNLS…DSSG). Over residues 687–699 (TTPESTTQLSISP) the composition is skewed to polar residues.

The protein belongs to the tubulin--tyrosine ligase family. As to quaternary structure, found in a complex with CEP41. The cofactor is Mg(2+).

It is found in the cytoplasm. It localises to the cytoskeleton. The protein resides in the cilium axoneme. The protein localises to the cilium basal body. The enzyme catalyses L-glutamyl-[protein] + L-glutamate + ATP = gamma-L-glutamyl-L-glutamyl-[protein] + ADP + phosphate + H(+). It carries out the reaction (L-glutamyl)(n)-gamma-L-glutamyl-L-glutamyl-[protein] + L-glutamate + ATP = (L-glutamyl)(n+1)-gamma-L-glutamyl-L-glutamyl-[protein] + ADP + phosphate + H(+). Polyglutamylase which modifies both tubulin and non-tubulin proteins, generating alpha-linked polyglutamate side chains on the gamma-carboxyl group of specific glutamate residues of target proteins. Preferentially mediates ATP-dependent long polyglutamate chain elongation over the initiation step of the polyglutamylation reaction. Preferentially modifies the alpha-tubulin tail over a beta-tail. Promotes tubulin polyglutamylation which stimulates spastin/SPAST-mediated microtubule severing, thereby regulating microtubule functions. Mediates microtubule polyglutamylation in primary cilia axoneme, which is important for ciliary structural formation and motility. Mediates microtubule polyglutamylation in motile cilia, necessary for the regulation of ciliary coordinated beating. Polyglutamylates non-tubulin protein nucleotidyltransferase CGAS, leading to CGAS DNA-binding inhibition, thereby preventing antiviral defense response. The protein is Tubulin polyglutamylase TTLL6 of Homo sapiens (Human).